Here is a 399-residue protein sequence, read N- to C-terminus: Glutathione S-transferase LANCL1 (399 aa).

Ala2 bears the N-acetylalanine mark. An N6-acetyllysine modification is found at Lys142. Residue Cys276 participates in Zn(2+) binding. Lys317 is a binding site for glutathione. 2 residues coordinate Zn(2+): Cys322 and His323. 364–367 lines the glutathione pocket; that stretch reads RTAD.

The protein belongs to the LanC-like protein family. Interacts with the C-terminal of STOM. Interacts with the EPS8 SH3 domain. Interaction with EPS8 is inhibited by glutathione binding. Detected in spinal cord (at protein level). Ubiquitous. Strongly expressed in brain, testis, alveolar macrophages and epithelial cells of the lung, kidney and intestine. Expression in brain increases during the first postnatal month and remaining high in adult.

Its subcellular location is the cytoplasm. It is found in the cell membrane. The catalysed reaction is RX + glutathione = an S-substituted glutathione + a halide anion + H(+). The enzyme catalyses 1-chloro-2,4-dinitrobenzene + glutathione = 2,4-dinitrophenyl-S-glutathione + chloride + H(+). Functions as a glutathione transferase. Catalyzes conjugation of the glutathione (GSH) to artificial substrates 1-chloro-2,4-dinitrobenzene (CDNB) and p-nitrophenyl acetate. Mitigates neuronal oxidative stress during normal postnatal development and in response to oxidative stresses probably through GSH antioxidant defense mechanism. May play a role in EPS8 signaling. Binds glutathione. In Mus musculus (Mouse), this protein is Glutathione S-transferase LANCL1.